The following is a 292-amino-acid chain: Hypersensitive-induced response protein 4 (292 aa).

Gly2 carries the N-myristoyl glycine lipid modification.

Self-interacts and forms heteromers. Interacts with NB-LRR class of R proteins before R proteins (e.g. RPS2 or RPM1) are activated by the effectors.

The protein resides in the cell membrane. This is Hypersensitive-induced response protein 4 (HIR4) from Arabidopsis thaliana (Mouse-ear cress).